The sequence spans 75 residues: Small integral membrane protein 7 (75 aa).

Residues 1–17 (MIGDILLFGTLLMNAGA) form the signal peptide. Topologically, residues 18–53 (VLNFKLKKKDTQGFGEESREPSTGDNIREFLLSLRY) are extracellular. The helical transmembrane segment at 54–74 (FRIFIALWNIFMMFCMIVLFG) threads the bilayer. Serine 75 is a topological domain (cytoplasmic).

This sequence belongs to the SMIM7 family.

It localises to the membrane. This Homo sapiens (Human) protein is Small integral membrane protein 7 (SMIM7).